Reading from the N-terminus, the 344-residue chain is MASGVGAACEELPPDGTCDECEPDEAPGAEEVCRDCGFCYCRRHADAHRQKFLSHRLAAYVHGAQAWTPPASGDDALPEDVEAKGEAEGEVESEVGEEESESEVDSESEEESETEEDSEDESDEESEEDSEEEMEDEQESEAEEDNQEGESEAEGETEAESEFDPEIEMEAERVAKRKCPDHGLDLSTYCQEDRQLICVLCPVIGAHRGHQLSTLDEAFEELRSKDSGGLKAAMIELVERLKFKSSDPKVTRDQMKVFIQQEFKKVQKVIADEEQKALHLVDIQEAMATAHVTEILADIQSHMDRLMTQMAQAKEQLDTSNESAEPKAEGDEEGPSGASEEEDT.

Positions 69 to 165 are disordered; that stretch reads PPASGDDALP…ETEAESEFDP (97 aa). The span at 88-165 shows a compositional bias: acidic residues; it reads EGEVESEVGE…ETEAESEFDP (78 aa). The B box-type zinc finger occupies 174–215; that stretch reads VAKRKCPDHGLDLSTYCQEDRQLICVLCPVIGAHRGHQLSTL. 4 residues coordinate Zn(2+): Cys179, His182, Cys201, and His207. Positions 290 to 325 form a coiled coil; the sequence is AHVTEILADIQSHMDRLMTQMAQAKEQLDTSNESAE. A disordered region spans residues 309-344; sequence QMAQAKEQLDTSNESAEPKAEGDEEGPSGASEEEDT. Acidic residues predominate over residues 330-344; the sequence is GDEEGPSGASEEEDT. Residues Ser336 and Ser339 each carry the phosphoserine modification.

As to quaternary structure, interacts (via coiled coil) with TRIM17 (via coiled coil).

May play a role in the process of differentiation and maturation of neuronal cells. May regulate the activity of TRIM17. Is a negative regulator of PAX6 expression. The chain is Tripartite motif-containing protein 44 (Trim44) from Rattus norvegicus (Rat).